A 402-amino-acid chain; its full sequence is 4-hydroxy-3-methylbut-2-en-1-yl diphosphate synthase (ferredoxin) (402 aa).

[4Fe-4S] cluster-binding residues include Cys-311, Cys-314, Cys-345, and Glu-352.

The protein belongs to the IspG family. The cofactor is [4Fe-4S] cluster.

The catalysed reaction is (2E)-4-hydroxy-3-methylbut-2-enyl diphosphate + 2 oxidized [2Fe-2S]-[ferredoxin] + H2O = 2-C-methyl-D-erythritol 2,4-cyclic diphosphate + 2 reduced [2Fe-2S]-[ferredoxin] + H(+). It participates in isoprenoid biosynthesis; isopentenyl diphosphate biosynthesis via DXP pathway; isopentenyl diphosphate from 1-deoxy-D-xylulose 5-phosphate: step 5/6. In terms of biological role, converts 2C-methyl-D-erythritol 2,4-cyclodiphosphate (ME-2,4cPP) into 1-hydroxy-2-methyl-2-(E)-butenyl 4-diphosphate, using ferredoxin I (PetF) as the reducing agent. This chain is 4-hydroxy-3-methylbut-2-en-1-yl diphosphate synthase (ferredoxin), found in Thermosynechococcus vestitus (strain NIES-2133 / IAM M-273 / BP-1).